The sequence spans 1157 residues: uncharacterized protein (1157 aa).

The N-terminal stretch at 1-18 (MNRNIFITLLISLLALSG) is a signal peptide. Cys19 is lipidated: N-palmitoyl cysteine. A lipid anchor (S-diacylglycerol cysteine) is attached at Cys19. A run of 4 helical transmembrane segments spans residues 292–312 (LSVSALLTLYIMFTGFSFLIG), 394–414 (LGFIYIILYLIALYFIFLLIF), 423–443 (ALITIGMIITMAPIFICFMLF), and 458–478 (ISYAIQPIILFVGIAFIGMII). The segment at 1134–1157 (QYQKPVENSGRKLRKLEDHLRNMK) is disordered. Positions 1148-1157 (KLEDHLRNMK) are enriched in basic and acidic residues.

The protein belongs to the TrbL/VirB6 family.

It localises to the cell membrane. This is an uncharacterized protein from Rickettsia bellii (strain RML369-C).